The primary structure comprises 143 residues: D-aminoacyl-tRNA deacylase (143 aa).

The Gly-cisPro motif, important for rejection of L-amino acids signature appears at 135 to 136 (GP).

The protein belongs to the DTD family. In terms of assembly, homodimer.

The protein resides in the cytoplasm. The catalysed reaction is glycyl-tRNA(Ala) + H2O = tRNA(Ala) + glycine + H(+). It carries out the reaction a D-aminoacyl-tRNA + H2O = a tRNA + a D-alpha-amino acid + H(+). Its function is as follows. An aminoacyl-tRNA editing enzyme that deacylates mischarged D-aminoacyl-tRNAs. Also deacylates mischarged glycyl-tRNA(Ala), protecting cells against glycine mischarging by AlaRS. Acts via tRNA-based rather than protein-based catalysis; rejects L-amino acids rather than detecting D-amino acids in the active site. By recycling D-aminoacyl-tRNA to D-amino acids and free tRNA molecules, this enzyme counteracts the toxicity associated with the formation of D-aminoacyl-tRNA entities in vivo and helps enforce protein L-homochirality. This Nocardia farcinica (strain IFM 10152) protein is D-aminoacyl-tRNA deacylase.